We begin with the raw amino-acid sequence, 157 residues long: Arginine repressor (157 aa).

The protein belongs to the ArgR family.

Its subcellular location is the cytoplasm. It functions in the pathway amino-acid biosynthesis; L-arginine biosynthesis [regulation]. In terms of biological role, regulates arginine biosynthesis genes. This chain is Arginine repressor, found in Bacteroides fragilis (strain YCH46).